A 23-amino-acid polypeptide reads, in one-letter code: Basic phospholipase A2 mangshantoxin (23 aa).

The protein belongs to the phospholipase A2 family. Group II subfamily. Ca(2+) serves as cofactor. Contains 7 disulfide bonds. Expressed by the venom gland.

It localises to the secreted. It carries out the reaction a 1,2-diacyl-sn-glycero-3-phosphocholine + H2O = a 1-acyl-sn-glycero-3-phosphocholine + a fatty acid + H(+). In terms of biological role, snake venom phospholipase A2 (PLA2) that displays presynaptic neurotoxicity. PLA2 catalyzes the calcium-dependent hydrolysis of the 2-acyl groups in 3-sn-phosphoglycerides. The sequence is that of Basic phospholipase A2 mangshantoxin from Protobothrops mangshanensis (Mangshan pitviper).